The sequence spans 235 residues: Ion-translocating oxidoreductase complex subunit E (235 aa).

A run of 5 helical transmembrane segments spans residues 63–83, 93–113, 117–137, 152–172, and 206–226; these read LGLSLATMLVLTCTNTVISLF, IPIYVMIIATTVTAVQLLMNA, TLYQSLGIFIPLIVTNCIIIG, IWDGFSMGLGMALSLTILGAL, and SFLLFILPPGAFIGLGLLLAI.

Belongs to the NqrDE/RnfAE family. In terms of assembly, the complex is composed of six subunits: RnfA, RnfB, RnfC, RnfD, RnfE and RnfG.

The protein localises to the cell inner membrane. Part of a membrane-bound complex that couples electron transfer with translocation of ions across the membrane. This Haemophilus influenzae (strain PittEE) protein is Ion-translocating oxidoreductase complex subunit E.